The chain runs to 508 residues: Protein MGF 505-9R (508 aa).

ANK repeat units lie at residues 54 to 83, 253 to 282, and 313 to 343; these read SINL…NLHY, QVDT…RKTV, and IIKK…KINL.

This sequence belongs to the asfivirus MGF 505 family.

In terms of biological role, plays a role in virus cell tropism, and may be required for efficient virus replication in macrophages. This chain is Protein MGF 505-9R, found in Ornithodoros (relapsing fever ticks).